A 486-amino-acid polypeptide reads, in one-letter code: Cobyric acid synthase (486 aa).

A GATase cobBQ-type domain is found at 248 to 435; that stretch reads VLNVVVPVLP…LHGLFESPAA (188 aa). The Nucleophile role is filled by Cys-329. The active site involves His-427.

Belongs to the CobB/CobQ family. CobQ subfamily.

The protein operates within cofactor biosynthesis; adenosylcobalamin biosynthesis. Catalyzes amidations at positions B, D, E, and G on adenosylcobyrinic A,C-diamide. NH(2) groups are provided by glutamine, and one molecule of ATP is hydrogenolyzed for each amidation. The protein is Cobyric acid synthase of Pseudomonas syringae pv. syringae (strain B728a).